Reading from the N-terminus, the 335-residue chain is Biotin synthase (335 aa).

The tract at residues 1–20 is disordered; the sequence is MVSVGTQSHSGRDQAEQNPS. Residues 59-284 enclose the Radical SAM core domain; sequence GHLQKSSLLS…MMPQSMVRLS (226 aa). The [4Fe-4S] cluster site is built by cysteine 74, cysteine 78, and cysteine 81. Residues cysteine 118, cysteine 150, cysteine 210, and arginine 282 each contribute to the [2Fe-2S] cluster site.

It belongs to the radical SAM superfamily. Biotin synthase family. In terms of assembly, homodimer. The cofactor is [4Fe-4S] cluster. It depends on [2Fe-2S] cluster as a cofactor.

The enzyme catalyses (4R,5S)-dethiobiotin + (sulfur carrier)-SH + 2 reduced [2Fe-2S]-[ferredoxin] + 2 S-adenosyl-L-methionine = (sulfur carrier)-H + biotin + 2 5'-deoxyadenosine + 2 L-methionine + 2 oxidized [2Fe-2S]-[ferredoxin]. It participates in cofactor biosynthesis; biotin biosynthesis; biotin from 7,8-diaminononanoate: step 2/2. Its function is as follows. Catalyzes the conversion of dethiobiotin (DTB) to biotin by the insertion of a sulfur atom into dethiobiotin via a radical-based mechanism. In Zymomonas mobilis subsp. mobilis (strain ATCC 31821 / ZM4 / CP4), this protein is Biotin synthase.